We begin with the raw amino-acid sequence, 449 residues long: Argininosuccinate synthase (449 aa).

ATP-binding positions include 17–25 (AFSGGLDTS) and A43. L-citrulline is bound at residue Y99. ATP is bound by residues G129 and T131. 3 residues coordinate L-aspartate: T131, N135, and D136. N135 is a binding site for L-citrulline. D136 contacts ATP. Positions 139 and 192 each coordinate L-citrulline. Residue D194 coordinates ATP. Residues T201, E203, and E280 each contribute to the L-citrulline site.

Belongs to the argininosuccinate synthase family. Type 2 subfamily. In terms of assembly, homotetramer.

It is found in the cytoplasm. The catalysed reaction is L-citrulline + L-aspartate + ATP = 2-(N(omega)-L-arginino)succinate + AMP + diphosphate + H(+). Its pathway is amino-acid biosynthesis; L-arginine biosynthesis; L-arginine from L-ornithine and carbamoyl phosphate: step 2/3. The protein is Argininosuccinate synthase of Dickeya dadantii (strain 3937) (Erwinia chrysanthemi (strain 3937)).